Here is a 264-residue protein sequence, read N- to C-terminus: Putative hydro-lyase Bpet2233 (264 aa).

The protein belongs to the D-glutamate cyclase family.

In Bordetella petrii (strain ATCC BAA-461 / DSM 12804 / CCUG 43448), this protein is Putative hydro-lyase Bpet2233.